Consider the following 660-residue polypeptide: FAST kinase domain-containing protein 3, mitochondrial (660 aa).

A mitochondrion-targeting transit peptide spans 1-57 (MALVTLRRNLYHLSDFRIHGALAALKTQQVNHVHKTVKEHLCPWFWSQHPGPIRVRF). Residues 591–649 (VALCIDGPKRFCLNSKHLLGKEATKQRHLRLLGYQVVQIPYYEIEMLKSRLELVDYLQG) form the RAP domain.

It belongs to the FAST kinase family.

Its subcellular location is the mitochondrion. In terms of biological role, required for normal mitochondrial respiration. Increases steady-state levels and half-lives of a subset of mature mitochondrial mRNAs MT-ND2, MT-ND3, MT-CYTB, MT-CO2, and MT-ATP8/6. Promotes MT-CO1 mRNA translation and increases mitochondrial complex IV assembly and activity. In Bos taurus (Bovine), this protein is FAST kinase domain-containing protein 3, mitochondrial (FASTKD3).